A 297-amino-acid polypeptide reads, in one-letter code: Large ribosomal subunit protein uL18 (297 aa).

G2 carries the post-translational modification N-acetylglycine. K5 and K48 each carry N6-acetyllysine. S185 is modified (phosphoserine). The residue at position 220 (K220) is an N6-acetyllysine; alternate. Residue K220 forms a Glycyl lysine isopeptide (Lys-Gly) (interchain with G-Cter in SUMO1); alternate linkage. A Glycyl lysine isopeptide (Lys-Gly) (interchain with G-Cter in SUMO2); alternate cross-link involves residue K220. T232 carries the phosphothreonine modification. The segment at 253–297 (YEKKPKREVKKKRWNRPKMSLAQKKDRVAQKKASFLRAQERAAES) is disordered. The span at 258 to 268 (KREVKKKRWNR) shows a compositional bias: basic residues. S272 is subject to Phosphoserine.

Belongs to the universal ribosomal protein uL18 family. Component of the large ribosomal subunit (LSU). Part of the 5S RNP complex, which is a LSU subcomplex composed of the 5S RNA, RPL5 and RPL11. Component of a hexameric 5S RNP precursor complex, composed of 5S RNA, RRS1, RPF2/BXDC1, RPL5, RPL11 and HEATR3; this complex acts as a precursor for ribosome assembly. Interacts with isoform 1 of NVL in an ATP-dependent manner. Interacts with RRP1B. Interacts with IPO5, IPO7 and KPNB1; these interactions may be involved in RPL5 nuclear import for the assembly of ribosomal subunits.

The protein localises to the cytoplasm. The protein resides in the nucleus. It is found in the nucleolus. Component of the ribosome, a large ribonucleoprotein complex responsible for the synthesis of proteins in the cell. The small ribosomal subunit (SSU) binds messenger RNAs (mRNAs) and translates the encoded message by selecting cognate aminoacyl-transfer RNA (tRNA) molecules. The large subunit (LSU) contains the ribosomal catalytic site termed the peptidyl transferase center (PTC), which catalyzes the formation of peptide bonds, thereby polymerizing the amino acids delivered by tRNAs into a polypeptide chain. The nascent polypeptides leave the ribosome through a tunnel in the LSU and interact with protein factors that function in enzymatic processing, targeting, and the membrane insertion of nascent chains at the exit of the ribosomal tunnel. As part of the 5S RNP/5S ribonucleoprotein particle it is an essential component of the LSU, required for its formation and the maturation of rRNAs. It also couples ribosome biogenesis to p53/TP53 activation. As part of the 5S RNP it accumulates in the nucleoplasm and inhibits MDM2, when ribosome biogenesis is perturbed, mediating the stabilization and the activation of TP53. The polypeptide is Large ribosomal subunit protein uL18 (RPL5) (Oryctolagus cuniculus (Rabbit)).